Here is a 447-residue protein sequence, read N- to C-terminus: MKTLLLCVGLLLSWERGQVLGDQLVSDNELQEMSTQGSKYIDREIQNAVKGVQEIKTLIEKTNEERKTLLSVLEEAKKNKEDALNETRDSETKLKAFPEVCNETMMALWEECKPCLKQTCMKFYARVCRSGSGLVGRQLEEFLNQSSPFYFWINGDRIDSLLENDRQQSHVLDVMQDSFNRATGIMDELFQDRFFTHKPQDTFYHSPFSYFRRPPLHYAKSRLVRNIMPLSLYGPLNFQDMFQPFFEMIHQAQQAMDVHLHSPAYQTPNVEFITGGPDDRAVCKEIRHNSTGCLRMKDQCAKCQEILSVDCSANNPSQNQLRQELNDSLRLAEELTKRYNELLQSYQWKMLNTSSLLDQPNEQFNWVSQLANLTQGPDQYYLRVSTVTSHTSESEAPSRVTEVVVKLFDSDPITITIPEEVSRDNPKFMETVAEKALQEYRKKKRVE.

Positions M1–D22 are cleaved as a signal peptide. A Nuclear localization signal motif is present at residues K77–K80. Residues N85 and N102 are each glycosylated (N-linked (GlcNAc...) asparagine). Intrachain disulfides connect C101/C311, C112/C303, C115/C300, C120/C293, and C128/C283. A Phosphoserine modification is found at S132. Residues N144, N289, N326, N352, and N372 are each glycosylated (N-linked (GlcNAc...) asparagine). Position 394 is a phosphoserine (S394). Positions R441 to R445 match the Nuclear localization signal motif.

The protein belongs to the clusterin family. Antiparallel disulfide-linked heterodimer of an alpha chain and a beta chain. Self-associates and forms higher oligomers. Interacts with a broad range of misfolded proteins, including APP, APOC2 and LYZ. Slightly acidic pH promotes interaction with misfolded proteins. Forms high-molecular weight oligomers upon interaction with misfolded proteins. Interacts with APOA1, LRP2, CLUAP1 and PON1. Interacts with the complement membrane attack complex. Interacts (via alpha chain) with XRCC6. Interacts with SYVN1, COMMD1, BTRC, CUL1 and with ubiquitin and SCF (SKP1-CUL1-F-box protein) E3 ubiquitin-protein ligase complexes. Interacts (via alpha chain) with BAX in stressed cells, where BAX undergoes a conformation change leading to association with the mitochondrial membrane. Does not interact with BAX in unstressed cells. Found in a complex with LTF, CLU, EPPIN and SEMG1. Interacts (immaturely glycosylated pre-secreted form) with HSPA5; this interaction promotes CLU stability and facilitates stress-induced CLU retrotranslocation from the secretory pathway to the mitochondria, thereby reducing stress-induced apoptosis by stabilizing mitochondrial membrane integrity. Interacts with BCL2L1; this interaction releases and activates BAX and promotes cell death. Interacts with TGFBR2 and ACVR1. Interacts (secreted form) with STMN3; this interaction may act as an important modulator during neuronal differentiation. Interacts with VLDLR and LRP8. In terms of processing, proteolytically cleaved on its way through the secretory system, probably within the Golgi lumen. Proteolytic cleavage is not necessary for its chaperone activity. All non-secreted forms are not proteolytically cleaved. Chaperone activity of uncleaved forms is dependent on a non-reducing environment. Post-translationally, polyubiquitinated, leading to proteasomal degradation. Under cellular stress, the intracellular level of cleaved form is reduced due to proteasomal degradation. Heavily N-glycosylated. About 30% of the protein mass is comprised of complex N-linked carbohydrate. Endoplasmic reticulum (ER) stress induces changes in glycosylation status and increases level of hypoglycosylated forms. Core carbohydrates are essential for chaperone activity. Non-secreted forms are hypoglycosylated or unglycosylated.

It localises to the secreted. It is found in the nucleus. The protein resides in the cytoplasm. Its subcellular location is the mitochondrion membrane. The protein localises to the cytosol. It localises to the microsome. It is found in the endoplasmic reticulum. The protein resides in the mitochondrion. Its subcellular location is the perinuclear region. The protein localises to the cytoplasmic vesicle. It localises to the secretory vesicle. It is found in the chromaffin granule. Functionally, functions as extracellular chaperone that prevents aggregation of non native proteins. Prevents stress-induced aggregation of blood plasma proteins. Inhibits formation of amyloid fibrils by APP, APOC2, B2M, CALCA, CSN3, SNCA and aggregation-prone LYZ variants (in vitro). Does not require ATP. Maintains partially unfolded proteins in a state appropriate for subsequent refolding by other chaperones, such as HSPA8/HSC70. Does not refold proteins by itself. Binding to cell surface receptors triggers internalization of the chaperone-client complex and subsequent lysosomal or proteasomal degradation. When secreted, protects cells against apoptosis and against cytolysis by complement: inhibits assembly of the complement membrane attack complex (MAC) by preventing polymerization of C9 pore component of the MAC complex. Intracellular forms interact with ubiquitin and SCF (SKP1-CUL1-F-box protein) E3 ubiquitin-protein ligase complexes and promote the ubiquitination and subsequent proteasomal degradation of target proteins. Promotes proteasomal degradation of COMMD1 and IKBKB. Modulates NF-kappa-B transcriptional activity. Following stress, promotes apoptosis. Inhibits apoptosis when associated with the mitochondrial membrane by interference with BAX-dependent release of cytochrome c into the cytoplasm. Plays a role in the regulation of cell proliferation. An intracellular form suppresses stress-induced apoptosis by stabilizing mitochondrial membrane integrity through interaction with HSPA5. Secreted form does not affect caspase or BAX-mediated intrinsic apoptosis and TNF-induced NF-kappa-B-activity. Secreted form act as an important modulator during neuronal differentiation through interaction with STMN3. Plays a role in the clearance of immune complexes that arise during cell injury. In Oryctolagus cuniculus (Rabbit), this protein is Clusterin (CLU).